Consider the following 64-residue polypeptide: SPbeta prophage-derived uncharacterized protein YosJ (64 aa).

In Bacillus subtilis (strain 168), this protein is SPbeta prophage-derived uncharacterized protein YosJ (yosJ).